A 722-amino-acid polypeptide reads, in one-letter code: Threonine--tRNA ligase 1, cytoplasmic (722 aa).

The span at 1–10 (MSQEKASSPS) shows a compositional bias: polar residues. Positions 1-48 (MSQEKASSPSGKMDGEKPVDASEEKRKEGGKKKSKDGGGDGGRAELNP) are disordered. A compositionally biased stretch (basic and acidic residues) spans 13 to 27 (MDGEKPVDASEEKRK). One can recognise a TGS domain in the interval 78–142 (DSKPIKVTLP…ETDCTLELLK (65 aa)). Lys242 is modified (N6-acetyllysine). Thr245 carries the phosphothreonine modification. Residue Tyr297 is modified to Phosphotyrosine. Phosphothreonine is present on Thr452.

It belongs to the class-II aminoacyl-tRNA synthetase family. Homodimer. In terms of processing, ISGylated.

Its subcellular location is the cytoplasm. It carries out the reaction tRNA(Thr) + L-threonine + ATP = L-threonyl-tRNA(Thr) + AMP + diphosphate + H(+). Its function is as follows. Catalyzes the attachment of threonine to tRNA(Thr) in a two-step reaction: threonine is first activated by ATP to form Thr-AMP and then transferred to the acceptor end of tRNA(Thr). Also edits incorrectly charged tRNA(Thr) via its editing domain, at the post-transfer stage. This chain is Threonine--tRNA ligase 1, cytoplasmic (Tars1), found in Mus musculus (Mouse).